A 71-amino-acid polypeptide reads, in one-letter code: Small ribosomal subunit protein eS17 (71 aa).

This sequence belongs to the eukaryotic ribosomal protein eS17 family.

This is Small ribosomal subunit protein eS17 from Pyrobaculum arsenaticum (strain DSM 13514 / JCM 11321 / PZ6).